The sequence spans 318 residues: UAP56-interacting factor (318 aa).

Methionine 1 is modified (N-acetylmethionine). The segment at 1–27 is disordered; the sequence is MNRFSTRLMGATATPPPAPPKARSNEN. Threonine 14 carries the phosphothreonine modification. Serine 24 is modified (phosphoserine). The UAP56-binding motif signature appears at 27 to 45; that stretch reads NLDKIDMSLDDIIKLNRKE. Phosphoserine is present on residues serine 61 and serine 118. Lysine 140 is covalently cross-linked (Glycyl lysine isopeptide (Lys-Gly) (interchain with G-Cter in SUMO1)). Over residues 163–180 the composition is skewed to polar residues; that stretch reads LNRKNNIPNNFTRSGNKL. The interval 163–183 is disordered; it reads LNRKNNIPNNFTRSGNKLSHQ. Lysine 261 is covalently cross-linked (Glycyl lysine isopeptide (Lys-Gly) (interchain with G-Cter in SUMO2)).

Belongs to the UIF family. In terms of assembly, interacts with DDX39B/UAP56 and NXF1; interaction with DDX39B/UAP56 and NXF1 are mutually exclusive. Interacts with SSRP1; required for its recruitment to mRNAs. Interacts with CHTOP.

The protein resides in the nucleus. It is found in the nucleoplasm. The protein localises to the nucleus speckle. In terms of biological role, required for mRNA export from the nucleus to the cytoplasm. Acts as an adapter that uses the DDX39B/UAP56-NFX1 pathway to ensure efficient mRNA export and delivering to the nuclear pore. Associates with spliced and unspliced mRNAs simultaneously with ALYREF/THOC4. This is UAP56-interacting factor (FYTTD1) from Bos taurus (Bovine).